A 256-amino-acid polypeptide reads, in one-letter code: tRNA-cytidine(32) 2-sulfurtransferase (256 aa).

The short motif at 35-40 is the PP-loop motif element; that stretch reads SGGKDS. [4Fe-4S] cluster is bound by residues cysteine 110, cysteine 113, and cysteine 201.

The protein belongs to the TtcA family. As to quaternary structure, homodimer. It depends on Mg(2+) as a cofactor. Requires [4Fe-4S] cluster as cofactor.

It is found in the cytoplasm. The enzyme catalyses cytidine(32) in tRNA + S-sulfanyl-L-cysteinyl-[cysteine desulfurase] + AH2 + ATP = 2-thiocytidine(32) in tRNA + L-cysteinyl-[cysteine desulfurase] + A + AMP + diphosphate + H(+). Its pathway is tRNA modification. Its function is as follows. Catalyzes the ATP-dependent 2-thiolation of cytidine in position 32 of tRNA, to form 2-thiocytidine (s(2)C32). The sulfur atoms are provided by the cysteine/cysteine desulfurase (IscS) system. This chain is tRNA-cytidine(32) 2-sulfurtransferase, found in Coxiella burnetii (strain CbuG_Q212) (Coxiella burnetii (strain Q212)).